The following is a 438-amino-acid chain: Adenylyltransferase and sulfurtransferase MOCS3 (438 aa).

ATP contacts are provided by residues Gly80, Asp101, 108–112, Lys125, and 169–170; these read TNLHR and DN. Zn(2+) is bound by residues Cys210 and Cys213. Cys227 serves as the catalytic Glycyl thioester intermediate; for adenylyltransferase activity. Zn(2+)-binding residues include Cys285 and Cys288. One can recognise a Rhodanese domain in the interval 335–436; the sequence is SKQRHVLVDV…WTRNVDKEFP (102 aa). Catalysis depends on Cys392, which acts as the Cysteine persulfide intermediate; for sulfurtransferase activity.

This sequence in the N-terminal section; belongs to the HesA/MoeB/ThiF family. UBA4 subfamily. Zn(2+) serves as cofactor.

It localises to the cytoplasm. The protein localises to the cytosol. It carries out the reaction [molybdopterin-synthase sulfur-carrier protein]-C-terminal Gly-Gly + ATP + H(+) = [molybdopterin-synthase sulfur-carrier protein]-C-terminal Gly-Gly-AMP + diphosphate. The catalysed reaction is [molybdopterin-synthase sulfur-carrier protein]-C-terminal Gly-Gly-AMP + S-sulfanyl-L-cysteinyl-[cysteine desulfurase] + AH2 = [molybdopterin-synthase sulfur-carrier protein]-C-terminal-Gly-aminoethanethioate + L-cysteinyl-[cysteine desulfurase] + A + AMP + 2 H(+). It functions in the pathway tRNA modification; 5-methoxycarbonylmethyl-2-thiouridine-tRNA biosynthesis. It participates in cofactor biosynthesis; molybdopterin biosynthesis. Plays a central role in 2-thiolation of mcm(5)S(2)U at tRNA wobble positions of cytosolic tRNA(Lys), tRNA(Glu) and tRNA(Gln). Also essential during biosynthesis of the molybdenum cofactor. Acts by mediating the C-terminal thiocarboxylation of sulfur carriers URM1 and MOCS2A. Its N-terminus first activates URM1 and MOCS2A as acyl-adenylates (-COAMP), then the persulfide sulfur on the catalytic cysteine is transferred to URM1 and MOCS2A to form thiocarboxylation (-COSH) of their C-terminus. The reaction probably involves hydrogen sulfide that is generated from the persulfide intermediate and that acts as a nucleophile towards URM1 and MOCS2A. Subsequently, a transient disulfide bond is formed. Does not use thiosulfate as sulfur donor; NFS1 probably acting as a sulfur donor for thiocarboxylation reactions. This chain is Adenylyltransferase and sulfurtransferase MOCS3, found in Culex quinquefasciatus (Southern house mosquito).